The sequence spans 1504 residues: NAC-alpha domain-containing protein 1 (1504 aa).

Disordered stretches follow at residues 127–150 (KPGA…ASAW), 208–261 (DREG…HGPH), 315–356 (PSDW…SSWS), 396–436 (LPQE…STSA), 460–525 (DTSA…TNSQ), 539–565 (GLES…TPTV), 701–812 (VLPP…EEGV), 834–1064 (DLES…LPVA), 1099–1366 (PFQH…AMSK), and 1430–1467 (PSEP…GLEP). Residues 342–354 (SSESSLSADSSSS) are compositionally biased toward low complexity. Residues 398-407 (QEEEEDEEDV) show a composition bias toward acidic residues. Low complexity-rich tracts occupy residues 408–422 (AATA…ATPD) and 462–475 (SAAS…SYAG). Positions 510–525 (STPQTSEQEICLTNSQ) are enriched in polar residues. Positions 775-792 (PQESPTASSLTLQSSHPT) are enriched in polar residues. The segment covering 930 to 939 (PPASNQAQQN) has biased composition (low complexity). A compositionally biased stretch (polar residues) spans 958-968 (STLSTKTSEPT). Over residues 989-1005 (EAHDGVKTHSPQREALR) the composition is skewed to basic and acidic residues. Residue serine 998 is modified to Phosphoserine. Positions 1016 to 1031 (SPGQGNGPKSATSQGA) are enriched in polar residues. Positions 1159–1171 (PGPPDPCLCPPPQ) are enriched in pro residues. Over residues 1213 to 1222 (VSLSPHSTLN) the composition is skewed to polar residues. The residue at position 1268 (serine 1268) is a Phosphoserine. In terms of domain architecture, NAC-A/B spans 1354 to 1419 (SRSEKKARKA…AKIEDLSQQV (66 aa)). Over residues 1451–1464 (EEQEEEDEEVEEAG) the composition is skewed to acidic residues.

The protein belongs to the NAC-alpha family.

The protein resides in the cytoplasm. It is found in the nucleus. In terms of biological role, may prevent inappropriate targeting of non-secretory polypeptides to the endoplasmic reticulum (ER). May bind to nascent polypeptide chains as they emerge from the ribosome and block their interaction with the signal recognition particle (SRP), which normally targets nascent secretory peptides to the ER. May also reduce the inherent affinity of ribosomes for protein translocation sites in the ER membrane (M sites). This is NAC-alpha domain-containing protein 1 (Nacad) from Mus musculus (Mouse).